Consider the following 262-residue polypeptide: Pyridoxine 5'-phosphate synthase (262 aa).

3-amino-2-oxopropyl phosphate is bound at residue Asn-6. Position 8–9 (8–9 (DH)) interacts with 1-deoxy-D-xylulose 5-phosphate. Arg-17 lines the 3-amino-2-oxopropyl phosphate pocket. His-43 acts as the Proton acceptor in catalysis. 1-deoxy-D-xylulose 5-phosphate is bound by residues Arg-45 and His-50. The Proton acceptor role is filled by Glu-70. Thr-102 lines the 1-deoxy-D-xylulose 5-phosphate pocket. The active-site Proton donor is the His-215. 3-amino-2-oxopropyl phosphate is bound by residues Gly-216 and 237–238 (GH).

It belongs to the PNP synthase family. As to quaternary structure, homooctamer; tetramer of dimers.

Its subcellular location is the cytoplasm. It catalyses the reaction 3-amino-2-oxopropyl phosphate + 1-deoxy-D-xylulose 5-phosphate = pyridoxine 5'-phosphate + phosphate + 2 H2O + H(+). It functions in the pathway cofactor biosynthesis; pyridoxine 5'-phosphate biosynthesis; pyridoxine 5'-phosphate from D-erythrose 4-phosphate: step 5/5. Functionally, catalyzes the complicated ring closure reaction between the two acyclic compounds 1-deoxy-D-xylulose-5-phosphate (DXP) and 3-amino-2-oxopropyl phosphate (1-amino-acetone-3-phosphate or AAP) to form pyridoxine 5'-phosphate (PNP) and inorganic phosphate. In Helicobacter pylori (strain Shi470), this protein is Pyridoxine 5'-phosphate synthase.